Reading from the N-terminus, the 206-residue chain is Peptidyl-tRNA hydrolase (206 aa).

Tyr14 lines the tRNA pocket. His19 functions as the Proton acceptor in the catalytic mechanism. Positions 64, 66, and 112 each coordinate tRNA.

The protein belongs to the PTH family. Monomer.

Its subcellular location is the cytoplasm. The catalysed reaction is an N-acyl-L-alpha-aminoacyl-tRNA + H2O = an N-acyl-L-amino acid + a tRNA + H(+). Its function is as follows. Hydrolyzes ribosome-free peptidyl-tRNAs (with 1 or more amino acids incorporated), which drop off the ribosome during protein synthesis, or as a result of ribosome stalling. Functionally, catalyzes the release of premature peptidyl moieties from peptidyl-tRNA molecules trapped in stalled 50S ribosomal subunits, and thus maintains levels of free tRNAs and 50S ribosomes. This is Peptidyl-tRNA hydrolase from Rhodopseudomonas palustris (strain ATCC BAA-98 / CGA009).